The primary structure comprises 506 residues: GMP synthase [glutamine-hydrolyzing] (506 aa).

Residues 3–188 (GFVILDFGSQ…AQGMCKAPAD (186 aa)) enclose the Glutamine amidotransferase type-1 domain. The active-site Nucleophile is C80. Active-site residues include H162 and E164. The region spanning 189 to 381 (WDAPHIKDIL…LGLPKEMLWR (193 aa)) is the GMPS ATP-PPase domain. An ATP-binding site is contributed by 217–223 (SGGVDST).

In terms of assembly, homodimer.

The catalysed reaction is XMP + L-glutamine + ATP + H2O = GMP + L-glutamate + AMP + diphosphate + 2 H(+). Its pathway is purine metabolism; GMP biosynthesis; GMP from XMP (L-Gln route): step 1/1. Catalyzes the synthesis of GMP from XMP. The chain is GMP synthase [glutamine-hydrolyzing] from Bdellovibrio bacteriovorus (strain ATCC 15356 / DSM 50701 / NCIMB 9529 / HD100).